The chain runs to 371 residues: MSRRRFDCRSISGLLTTTPQTPMKTENFNNFYTLTPKELGRGKFAVVRQCISKSTGQEYAAKFLKKRRRGQDCRAEILHEIAVLELARSCPHVINLHEVYETATEIILVLEYAAGGEIFNLCLPELAEMVSENDVIRLIKQILEGVHYLHQNNIVHLDLKPQNILLSSIYPLGDIKIVDFGMSRKIGNASELREIMGTPEYLAPEILNYDPITTATDMWNIGIIAYMLLTHTSPFVGEDNQETYLNISQVNVDYSEEMFSSVSQLATDFIQSLLVKNPEKRPTAESCLSHSWLQQWDFGSLFHPEETSESSQTQDLSLRSSEDKTPKSCNGSCGDREDKENIPEDDSLLSKRFRFDDSLPSPHELVPDLFC.

A Protein kinase domain is found at 33 to 293; it reads TLTPKELGRG…AESCLSHSWL (261 aa). Residues 39 to 47 and K62 contribute to the ATP site; that span reads LGRGKFAVV. The Proton acceptor role is filled by D158. Residues 308–345 are disordered; sequence SESSQTQDLSLRSSEDKTPKSCNGSCGDREDKENIPED. Positions 309-319 are enriched in polar residues; sequence ESSQTQDLSLR.

Belongs to the protein kinase superfamily. CAMK Ser/Thr protein kinase family. DAP kinase subfamily. Interacts with CHP1; the interaction induces CHP1 to translocate from the Golgi to the nucleus. Post-translationally, autophosphorylated. As to expression, highly expressed in thymus, spleen, and testis, lower levels present in the brain.

The protein localises to the nucleus. It is found in the cell membrane. It localises to the endoplasmic reticulum-Golgi intermediate compartment. The catalysed reaction is L-seryl-[protein] + ATP = O-phospho-L-seryl-[protein] + ADP + H(+). It catalyses the reaction L-threonyl-[protein] + ATP = O-phospho-L-threonyl-[protein] + ADP + H(+). Acts as a positive regulator of apoptosis. Phosphorylates myosin light chains. This is Serine/threonine-protein kinase 17B (Stk17b) from Rattus norvegicus (Rat).